A 94-amino-acid chain; its full sequence is Aspartyl/glutamyl-tRNA(Asn/Gln) amidotransferase subunit C (94 aa).

Belongs to the GatC family. Heterotrimer of A, B and C subunits.

It carries out the reaction L-glutamyl-tRNA(Gln) + L-glutamine + ATP + H2O = L-glutaminyl-tRNA(Gln) + L-glutamate + ADP + phosphate + H(+). The enzyme catalyses L-aspartyl-tRNA(Asn) + L-glutamine + ATP + H2O = L-asparaginyl-tRNA(Asn) + L-glutamate + ADP + phosphate + 2 H(+). Allows the formation of correctly charged Asn-tRNA(Asn) or Gln-tRNA(Gln) through the transamidation of misacylated Asp-tRNA(Asn) or Glu-tRNA(Gln) in organisms which lack either or both of asparaginyl-tRNA or glutaminyl-tRNA synthetases. The reaction takes place in the presence of glutamine and ATP through an activated phospho-Asp-tRNA(Asn) or phospho-Glu-tRNA(Gln). This is Aspartyl/glutamyl-tRNA(Asn/Gln) amidotransferase subunit C from Caldicellulosiruptor bescii (strain ATCC BAA-1888 / DSM 6725 / KCTC 15123 / Z-1320) (Anaerocellum thermophilum).